The following is a 156-amino-acid chain: Small ribosomal subunit protein uS7 (156 aa).

This sequence belongs to the universal ribosomal protein uS7 family. In terms of assembly, part of the 30S ribosomal subunit. Contacts proteins S9 and S11.

One of the primary rRNA binding proteins, it binds directly to 16S rRNA where it nucleates assembly of the head domain of the 30S subunit. Is located at the subunit interface close to the decoding center, probably blocks exit of the E-site tRNA. The protein is Small ribosomal subunit protein uS7 of Coprothermobacter proteolyticus (strain ATCC 35245 / DSM 5265 / OCM 4 / BT).